The primary structure comprises 163 residues: Phosphopantetheine adenylyltransferase (163 aa).

Residue Thr-11 coordinates substrate. Residues 11 to 12 (TF) and His-19 contribute to the ATP site. 3 residues coordinate substrate: Lys-43, Leu-75, and Arg-89. Residues 90 to 92 (GLR), Glu-100, and 125 to 131 (YMFISAT) contribute to the ATP site.

The protein belongs to the bacterial CoaD family. As to quaternary structure, homohexamer. Requires Mg(2+) as cofactor.

It localises to the cytoplasm. The catalysed reaction is (R)-4'-phosphopantetheine + ATP + H(+) = 3'-dephospho-CoA + diphosphate. Its pathway is cofactor biosynthesis; coenzyme A biosynthesis; CoA from (R)-pantothenate: step 4/5. Reversibly transfers an adenylyl group from ATP to 4'-phosphopantetheine, yielding dephospho-CoA (dPCoA) and pyrophosphate. The sequence is that of Phosphopantetheine adenylyltransferase from Azoarcus sp. (strain BH72).